A 172-amino-acid chain; its full sequence is Stellate orphon protein at 12D (172 aa).

Belongs to the casein kinase 2 subunit beta family. In terms of assembly, interacts in vitro with the casein kinase 2 alpha subunit (CkII-alpha). The relevance of such interaction is however unclear in vivo. In terms of tissue distribution, probably not expressed in wild-type flies. In males lacking the Y chromosome, it is testis-specific and constitutes the main component of star-shaped crystals.

Unknown. In males lacking the Y chromosome, its strong overexpression leads to the appearance of proteinaceous star-shaped crystals in the primary spermatocytes causing meiotic drive, possibly by interfering with normal casein kinase 2 activity. The polypeptide is Stellate orphon protein at 12D (Ste12DOR) (Drosophila melanogaster (Fruit fly)).